The following is a 355-amino-acid chain: MSGNSYGKIFKITTFGESHGEALGGIIDGCPPNIILDLDAIQIEMQRRKPGQSSIVTQRKEADEVQFLSGIFEGKTTGTPIGFIIKNTNQKSDDYSHIKDSYRPSHADYVYEKKYRIRDYRGGGRSSARETASRVVAGAIAKQVIPEIKINAFVSSVGDISLDKPYQDLNFSLTETNAVRCPDLASAEKMENYIKEIKKQGDTVGGTITCVIQNVPIGLGEPVFDKLHAELGKAMLSINAVKGFEYGSGFCGAKMKGSNHNDPYNQDGTTRTNLSGGIQGGISNGMDIYFRIAFKPVATLIQKQEVLTNTNEIIEQQGKGRHDPCVVPRAVPIVEAMAAIVMADFFLLNKIYNNH.

Arg48 is an NADP(+) binding site. Residues Arg125–Ser127, Asn239–Ala240, Gly280, Lys295–Thr299, and Arg321 each bind FMN.

This sequence belongs to the chorismate synthase family. Homotetramer. The cofactor is FMNH2.

It catalyses the reaction 5-O-(1-carboxyvinyl)-3-phosphoshikimate = chorismate + phosphate. Its pathway is metabolic intermediate biosynthesis; chorismate biosynthesis; chorismate from D-erythrose 4-phosphate and phosphoenolpyruvate: step 7/7. Functionally, catalyzes the anti-1,4-elimination of the C-3 phosphate and the C-6 proR hydrogen from 5-enolpyruvylshikimate-3-phosphate (EPSP) to yield chorismate, which is the branch point compound that serves as the starting substrate for the three terminal pathways of aromatic amino acid biosynthesis. This reaction introduces a second double bond into the aromatic ring system. The chain is Chorismate synthase from Flavobacterium psychrophilum (strain ATCC 49511 / DSM 21280 / CIP 103535 / JIP02/86).